A 380-amino-acid polypeptide reads, in one-letter code: Variant-surface-glycoprotein phospholipase C (380 aa).

Residues 31 to 205 (ITQVCFVGSH…SRRRIFLVVG (175 aa)) enclose the PI-PLC X-box domain.

In terms of assembly, monomer.

The protein localises to the membrane. It carries out the reaction a 6-(alpha-D-glucosaminyl)-1-(1,2-diacyl-sn-glycero-3-phospho)-1D-myo-inositol = 6-(alpha-D-glucosaminyl)-1D-myo-inositol 1,2-cyclic phosphate + a 1,2-diacyl-sn-glycerol. Its function is as follows. By hydrolysis of the attached glycolipid, releases soluble variant surface glycoprotein containing phosphoinositol from the cell wall of T.brucei after cell lysis. It also cleaves similar membrane anchors on some mammalian proteins. VSG lipase may play a role in processes such as parasite differentiation or antigenic variation. This is Variant-surface-glycoprotein phospholipase C from Trypanosoma cruzi.